The sequence spans 513 residues: MNILKSLISLSLITFISRILGFMRDLLIAYSFGASGITDAFFLAFKIPNLFRRIFAEGAFSQVFIPILSEYKNNKNIELTRNFISNILGLMIIILSLFTAFGIYFANDIVKICAPGFINSHEKLYLATKMLKIMFPYIFFVSLGSLTGSILNAWNYFSVPAYSSIFLNLSMIMFISFVTAYFNPKILSLAWAVIVGGVFQILYQFPYLKNINMLIFPKFNILNLGVLKFLKQIGIVALGMSVNQVSIIIATISSSFLISGSISWIYYSDRLVEFISGIFGVSLSTILLPLLSKSVNNINIKEYSRLLNWALRLVCILVIPSIIILFTLSESLITLLFKYGAFTYNDVIMTKNVIEFYSIGLLPFVLIKILLAGFYSIRNVKTPMKISIFILVLTQLMNIFFIKYFQYTSFALAISLASWINFFLLYRKLCQSEFFIPSTNWLRFLLKIFAAAMVMLILLFINKNLILSANTHSIFFKILRLFYICASSGGGYLFTLFCLGLRFNHFYLKSYKY.

The next 15 membrane-spanning stretches (helical) occupy residues 3 to 23, 25 to 45, 83 to 103, 133 to 153, 162 to 182, 186 to 206, 221 to 241, 245 to 265, 271 to 291, 313 to 333, 354 to 374, 382 to 402, 405 to 425, 441 to 461, and 481 to 501; these read ILKS…LGFM, DLLI…FLAF, FISN…AFGI, IMFP…ILNA, YSSI…TAYF, ILSL…YQFP, ILNL…LGMS, VSII…ISWI, LVEF…LPLL, LVCI…ESLI, IEFY…LAGF, TPMK…IFFI, FQYT…FFLL, WLRF…LLFI, and LFYI…CLGL.

It belongs to the MurJ/MviN family.

The protein resides in the cell inner membrane. It participates in cell wall biogenesis; peptidoglycan biosynthesis. Its function is as follows. Involved in peptidoglycan biosynthesis. Transports lipid-linked peptidoglycan precursors from the inner to the outer leaflet of the cytoplasmic membrane. In Buchnera aphidicola subsp. Baizongia pistaciae (strain Bp), this protein is Probable lipid II flippase MurJ.